A 461-amino-acid chain; its full sequence is Transcription factor GTE3, chloroplastic (461 aa).

Residues 1–11 (MASGPIAGGGV) show a composition bias toward gly residues. The segment at 1–41 (MASGPIAGGGVSKTKHKWSDSGNKSQKRSKPTVANSNSLGL) is disordered. Residues 1–51 (MASGPIAGGGVSKTKHKWSDSGNKSQKRSKPTVANSNSLGLEDNHQMMKIS) constitute a chloroplast transit peptide. The Bromo domain maps to 114 to 220 (KGTVQILKSC…NLFEEKWVPL (107 aa)). The region spanning 298–379 (LVEEASANRD…EYKESLSKKK (82 aa)) is the NET domain. The segment covering 376–392 (SKKKEEQGLDSERDAES) has biased composition (basic and acidic residues). Positions 376–461 (SKKKEEQGLD…SSGHESDTGN (86 aa)) are disordered. Residues 393-412 (FHNSVHESNTLVTGLESSKV) are compositionally biased toward polar residues. The span at 429–451 (GGSSSSNSSSSGSGSGSSGSDSD) shows a compositional bias: low complexity. The span at 452-461 (SSGHESDTGN) shows a compositional bias: basic and acidic residues.

Interacts with SIZ1 (via PHD domain). In terms of processing, sumoylated by SIZ1. Sumoylation reduces capacity to bind to acetylated histone H3.

Its subcellular location is the plastid. The protein resides in the chloroplast. Functionally, probable transcription factor that binds to acetylated histone H3. The protein is Transcription factor GTE3, chloroplastic (GTE3) of Arabidopsis thaliana (Mouse-ear cress).